A 495-amino-acid polypeptide reads, in one-letter code: Cobyric acid synthase (495 aa).

Residues Glu249–Trp443 enclose the GATase cobBQ-type domain. Cys330 functions as the Nucleophile in the catalytic mechanism. Residue His435 is part of the active site.

The protein belongs to the CobB/CobQ family. CobQ subfamily.

It functions in the pathway cofactor biosynthesis; adenosylcobalamin biosynthesis. Functionally, catalyzes amidations at positions B, D, E, and G on adenosylcobyrinic A,C-diamide. NH(2) groups are provided by glutamine, and one molecule of ATP is hydrogenolyzed for each amidation. The polypeptide is Cobyric acid synthase (Gloeothece citriformis (strain PCC 7424) (Cyanothece sp. (strain PCC 7424))).